The following is a 265-amino-acid chain: Shikimate dehydrogenase (NADP(+)) (265 aa).

Residues 15 to 17 (SLS) and Thr-62 each bind shikimate. Residue Lys-66 is the Proton acceptor of the active site. Residues Asn-87 and Asp-102 each contribute to the shikimate site. Residues 125 to 129 (GAGGA), 149 to 154 (NRTLEK), and Leu-209 contribute to the NADP(+) site. Tyr-211 contributes to the shikimate binding site. Gly-233 is an NADP(+) binding site.

This sequence belongs to the shikimate dehydrogenase family. In terms of assembly, homodimer.

The enzyme catalyses shikimate + NADP(+) = 3-dehydroshikimate + NADPH + H(+). It functions in the pathway metabolic intermediate biosynthesis; chorismate biosynthesis; chorismate from D-erythrose 4-phosphate and phosphoenolpyruvate: step 4/7. Its function is as follows. Involved in the biosynthesis of the chorismate, which leads to the biosynthesis of aromatic amino acids. Catalyzes the reversible NADPH linked reduction of 3-dehydroshikimate (DHSA) to yield shikimate (SA). The polypeptide is Shikimate dehydrogenase (NADP(+)) (Legionella pneumophila (strain Lens)).